The following is a 331-amino-acid chain: Lipoyl synthase (331 aa).

The tract at residues 1-20 (MTTETNPAVTPAYNPSEKQK) is disordered. Cys71, Cys76, Cys82, Cys97, Cys101, Cys104, and Ser311 together coordinate [4Fe-4S] cluster. In terms of domain architecture, Radical SAM core spans 82–300 (CFGKGTATFM…EEEAYKMGFA (219 aa)).

It belongs to the radical SAM superfamily. Lipoyl synthase family. Requires [4Fe-4S] cluster as cofactor.

It is found in the cytoplasm. The catalysed reaction is [[Fe-S] cluster scaffold protein carrying a second [4Fe-4S](2+) cluster] + N(6)-octanoyl-L-lysyl-[protein] + 2 oxidized [2Fe-2S]-[ferredoxin] + 2 S-adenosyl-L-methionine + 4 H(+) = [[Fe-S] cluster scaffold protein] + N(6)-[(R)-dihydrolipoyl]-L-lysyl-[protein] + 4 Fe(3+) + 2 hydrogen sulfide + 2 5'-deoxyadenosine + 2 L-methionine + 2 reduced [2Fe-2S]-[ferredoxin]. The protein operates within protein modification; protein lipoylation via endogenous pathway; protein N(6)-(lipoyl)lysine from octanoyl-[acyl-carrier-protein]: step 2/2. In terms of biological role, catalyzes the radical-mediated insertion of two sulfur atoms into the C-6 and C-8 positions of the octanoyl moiety bound to the lipoyl domains of lipoate-dependent enzymes, thereby converting the octanoylated domains into lipoylated derivatives. This Janthinobacterium sp. (strain Marseille) (Minibacterium massiliensis) protein is Lipoyl synthase.